Consider the following 318-residue polypeptide: Methionyl-tRNA formyltransferase (318 aa).

Residue 112–115 (SILP) coordinates (6S)-5,6,7,8-tetrahydrofolate.

It belongs to the Fmt family.

The catalysed reaction is L-methionyl-tRNA(fMet) + (6R)-10-formyltetrahydrofolate = N-formyl-L-methionyl-tRNA(fMet) + (6S)-5,6,7,8-tetrahydrofolate + H(+). Attaches a formyl group to the free amino group of methionyl-tRNA(fMet). The formyl group appears to play a dual role in the initiator identity of N-formylmethionyl-tRNA by promoting its recognition by IF2 and preventing the misappropriation of this tRNA by the elongation apparatus. This chain is Methionyl-tRNA formyltransferase, found in Haemophilus influenzae (strain PittEE).